Consider the following 79-residue polypeptide: Sec-independent protein translocase protein TatA (79 aa).

A helical transmembrane segment spans residues 1–21 (MGSLSIWHWIVVIAVILLLFG). Over residues 43 to 60 (MQDDEKTAEKPEPVKTID) the composition is skewed to basic and acidic residues. Positions 43–79 (MQDDEKTAEKPEPVKTIDHNAPAPGASRSDVGSKTTV) are disordered.

It belongs to the TatA/E family. As to quaternary structure, the Tat system comprises two distinct complexes: a TatABC complex, containing multiple copies of TatA, TatB and TatC subunits, and a separate TatA complex, containing only TatA subunits. Substrates initially bind to the TatABC complex, which probably triggers association of the separate TatA complex to form the active translocon.

The protein localises to the cell inner membrane. Part of the twin-arginine translocation (Tat) system that transports large folded proteins containing a characteristic twin-arginine motif in their signal peptide across membranes. TatA could form the protein-conducting channel of the Tat system. This Nitrobacter hamburgensis (strain DSM 10229 / NCIMB 13809 / X14) protein is Sec-independent protein translocase protein TatA.